The following is a 255-amino-acid chain: MFKIGNLELQSRLLLGTGKFENEEVQSKAIEASETNVLTFAVRRMNLYDRNLPNPLANVNLKDFITFPNTAGAKTAQEAIRIAEIANHAGVCDMIKVEVIGDDETLLPDPFETYEVCKVLLEKGYTVCPYISNDLVLAQRLEELGVHAVMPLASPIGTGRGINNPLNLSYIIENASVPVIVDAGIGSPKDACHAMELGADGILLNTAISAAKDPVKMAEAMKLGINAGRLSYEAGRIPVKYTAQASSPSEGLGFL.

Residue lysine 96 is the Schiff-base intermediate with DXP of the active site. 1-deoxy-D-xylulose 5-phosphate-binding positions include glycine 157, alanine 183–glycine 184, and asparagine 205–threonine 206.

It belongs to the ThiG family. Homotetramer. Forms heterodimers with either ThiH or ThiS.

It localises to the cytoplasm. It carries out the reaction [ThiS sulfur-carrier protein]-C-terminal-Gly-aminoethanethioate + 2-iminoacetate + 1-deoxy-D-xylulose 5-phosphate = [ThiS sulfur-carrier protein]-C-terminal Gly-Gly + 2-[(2R,5Z)-2-carboxy-4-methylthiazol-5(2H)-ylidene]ethyl phosphate + 2 H2O + H(+). The protein operates within cofactor biosynthesis; thiamine diphosphate biosynthesis. Catalyzes the rearrangement of 1-deoxy-D-xylulose 5-phosphate (DXP) to produce the thiazole phosphate moiety of thiamine. Sulfur is provided by the thiocarboxylate moiety of the carrier protein ThiS. In vitro, sulfur can be provided by H(2)S. In Staphylococcus epidermidis (strain ATCC 35984 / DSM 28319 / BCRC 17069 / CCUG 31568 / BM 3577 / RP62A), this protein is Thiazole synthase.